Here is a 260-residue protein sequence, read N- to C-terminus: (+)-borneol dehydrogenase 1 (260 aa).

Residues 20–26, aspartate 44, 67–68, and 94–96 each bind NAD(+); these read GGASGIG, DV, and NAG. The active-site Proton donor is serine 148. Positions 161, 165, and 196 each coordinate NAD(+). Tyrosine 161 acts as the Proton acceptor in catalysis. The active-site Proton donor/acceptor is the lysine 165.

The protein belongs to the short-chain dehydrogenases/reductases (SDR) family.

It carries out the reaction (1R,2S,4R)-borneol + NAD(+) = (1R,4R)-camphor + NADH + H(+). Functionally, involved in the biosynthesis of monoterpene natural products related to camphor. Catalayzes the oxidation of (+)-borneol to (+)-camphor. Shows absolute selectivity towards (+)-borneol. Catalyzes the oxidation of (+)-isoborneol to (-)-camphor. Shows absolute selectivity towards (+)-isoborneol. The chain is (+)-borneol dehydrogenase 1 from Salvia officinalis (Sage).